Consider the following 152-residue polypeptide: Regulatory protein RecX (152 aa).

This sequence belongs to the RecX family.

The protein resides in the cytoplasm. In terms of biological role, modulates RecA activity. The chain is Regulatory protein RecX from Haemophilus influenzae (strain PittEE).